Here is a 307-residue protein sequence, read N- to C-terminus: tRNA dimethylallyltransferase (307 aa).

9–16 (GPTAVGKT) provides a ligand contact to ATP. 11-16 (TAVGKT) is a substrate binding site. The interaction with substrate tRNA stretch occupies residues 34-37 (DSMQ).

This sequence belongs to the IPP transferase family. In terms of assembly, monomer. Mg(2+) serves as cofactor.

The enzyme catalyses adenosine(37) in tRNA + dimethylallyl diphosphate = N(6)-dimethylallyladenosine(37) in tRNA + diphosphate. Functionally, catalyzes the transfer of a dimethylallyl group onto the adenine at position 37 in tRNAs that read codons beginning with uridine, leading to the formation of N6-(dimethylallyl)adenosine (i(6)A). The sequence is that of tRNA dimethylallyltransferase from Limosilactobacillus reuteri (strain DSM 20016) (Lactobacillus reuteri).